Consider the following 315-residue polypeptide: Lipoyl synthase (315 aa).

The [4Fe-4S] cluster site is built by Cys62, Cys67, Cys73, Cys88, Cys92, Cys95, and Ser302. One can recognise a Radical SAM core domain in the interval 74 to 291; sequence FGKGTATFMI…ETEALRMGFR (218 aa).

This sequence belongs to the radical SAM superfamily. Lipoyl synthase family. [4Fe-4S] cluster serves as cofactor.

The protein localises to the cytoplasm. It carries out the reaction [[Fe-S] cluster scaffold protein carrying a second [4Fe-4S](2+) cluster] + N(6)-octanoyl-L-lysyl-[protein] + 2 oxidized [2Fe-2S]-[ferredoxin] + 2 S-adenosyl-L-methionine + 4 H(+) = [[Fe-S] cluster scaffold protein] + N(6)-[(R)-dihydrolipoyl]-L-lysyl-[protein] + 4 Fe(3+) + 2 hydrogen sulfide + 2 5'-deoxyadenosine + 2 L-methionine + 2 reduced [2Fe-2S]-[ferredoxin]. The protein operates within protein modification; protein lipoylation via endogenous pathway; protein N(6)-(lipoyl)lysine from octanoyl-[acyl-carrier-protein]: step 2/2. In terms of biological role, catalyzes the radical-mediated insertion of two sulfur atoms into the C-6 and C-8 positions of the octanoyl moiety bound to the lipoyl domains of lipoate-dependent enzymes, thereby converting the octanoylated domains into lipoylated derivatives. The sequence is that of Lipoyl synthase from Azoarcus sp. (strain BH72).